Consider the following 1214-residue polypeptide: ATP-dependent helicase/nuclease subunit A (1214 aa).

The region spanning 27–483 is the UvrD-like helicase ATP-binding domain; it reads HKRTAQQIEA…ILLKENFRSQ (457 aa). 48-55 is a binding site for ATP; that stretch reads ASAGSGKT. One can recognise a UvrD-like helicase C-terminal domain in the interval 512 to 800; it reads QLVAGSEAQK…NLMTIHKSKG (289 aa).

It belongs to the helicase family. AddA subfamily. Heterodimer of AddA and AddB/RexB. Mg(2+) serves as cofactor.

The enzyme catalyses Couples ATP hydrolysis with the unwinding of duplex DNA by translocating in the 3'-5' direction.. It carries out the reaction ATP + H2O = ADP + phosphate + H(+). In terms of biological role, the heterodimer acts as both an ATP-dependent DNA helicase and an ATP-dependent, dual-direction single-stranded exonuclease. Recognizes the chi site generating a DNA molecule suitable for the initiation of homologous recombination. The AddA nuclease domain is required for chi fragment generation; this subunit has the helicase and 3' -&gt; 5' nuclease activities. This Streptococcus equi subsp. zooepidemicus (strain MGCS10565) protein is ATP-dependent helicase/nuclease subunit A.